A 341-amino-acid chain; its full sequence is Paired box protein Pax-9 (341 aa).

Residues 4–130 constitute a DNA-binding region (paired); sequence AFGEVNQLGG…SSISRILRNK (127 aa). A PAI subdomain region spans residues 7-63; sequence EVNQLGGVFVNGRPLPNAIRLRIVELAQLGIRPCDISRQLRVSHGCVSKILARYNET. The RED subdomain stretch occupies residues 82–130; the sequence is TVVKHIRTYKQRDPGIFAWEIRDRLLADGVCDKYNVPSVSSISRILRNK. The tract at residues 168–189 is interaction with KDM5B; that stretch reads AAAAKVPTPPGVPAIPGSVAMP.

Interacts with KDM5B.

The protein localises to the nucleus. Functionally, transcription factor required for normal development of thymus, parathyroid glands, ultimobranchial bodies, teeth, skeletal elements of skull and larynx as well as distal limbs. This Leontopithecus rosalia (Golden lion tamarin) protein is Paired box protein Pax-9 (PAX9).